We begin with the raw amino-acid sequence, 738 residues long: Catalase-peroxidase 2 (738 aa).

The N-terminal stretch at M1–A26 is a signal peptide. The tryptophyl-tyrosyl-methioninium (Trp-Tyr) (with M-252) cross-link spans W104–Y226. H105 functions as the Proton acceptor in the catalytic mechanism. The segment at residues Y226–M252 is a cross-link (tryptophyl-tyrosyl-methioninium (Tyr-Met) (with W-104)). H267 contacts heme b.

Belongs to the peroxidase family. Peroxidase/catalase subfamily. In terms of assembly, homodimer or homotetramer. The cofactor is heme b. Post-translationally, formation of the three residue Trp-Tyr-Met cross-link is important for the catalase, but not the peroxidase activity of the enzyme.

The catalysed reaction is H2O2 + AH2 = A + 2 H2O. It catalyses the reaction 2 H2O2 = O2 + 2 H2O. Bifunctional enzyme with both catalase and broad-spectrum peroxidase activity. This chain is Catalase-peroxidase 2, found in Shewanella amazonensis (strain ATCC BAA-1098 / SB2B).